Here is a 617-residue protein sequence, read N- to C-terminus: Electron transfer flavoprotein-ubiquinone oxidoreductase, mitochondrial (617 aa).

The transit peptide at 1–33 (MMVPLAKLASPAYQCFHALKIKKNYLPLCATRW) directs the protein to the mitochondrion. An FAD-binding site is contributed by 75–80 (GAGPAG). N6-acetyllysine is present on lysine 96. An intramembrane segment occupies 109–130 (IGAHTLSGACLDPRAFEELFPD). Residues lysine 132 and lysine 223 each carry the N6-acetyllysine modification. Residues glycine 305 and glycine 306 each contribute to the a ubiquinone site. The residue at position 357 (lysine 357) is an N6-acetyllysine. Residues 428-447 (IGLHVTEYEDNLKNSWVWKE) lie within the membrane without spanning it. Serine 551 is subject to Phosphoserine. 4 residues coordinate [4Fe-4S] cluster: cysteine 561, cysteine 586, cysteine 589, and cysteine 592. A 4Fe-4S ferredoxin-type domain is found at 577–606 (FRLQINAQNCVHCKTCDIKDPSQNINWVVP).

As to quaternary structure, monomer. [4Fe-4S] cluster is required as a cofactor. Requires FAD as cofactor.

It is found in the mitochondrion inner membrane. It catalyses the reaction a ubiquinone + reduced [electron-transfer flavoprotein] = a ubiquinol + oxidized [electron-transfer flavoprotein] + H(+). Accepts electrons from ETF and reduces ubiquinone. In Sus scrofa (Pig), this protein is Electron transfer flavoprotein-ubiquinone oxidoreductase, mitochondrial (ETFDH).